A 403-amino-acid chain; its full sequence is S-adenosylmethionine synthase (403 aa).

His-16 contacts ATP. Residue Asp-18 coordinates Mg(2+). Glu-44 serves as a coordination point for K(+). The L-methionine site is built by Glu-57 and Gln-100. Positions Gln-100 to His-110 are flexible loop. Residues Asp-167–Lys-169, Arg-238–Phe-239, Asp-247, Arg-253–Lys-254, Ala-270, and Lys-274 contribute to the ATP site. Residue Asp-247 coordinates L-methionine. Position 278 (Lys-278) interacts with L-methionine.

Belongs to the AdoMet synthase family. Homotetramer; dimer of dimers. The cofactor is Mg(2+). K(+) is required as a cofactor.

It is found in the cytoplasm. It catalyses the reaction L-methionine + ATP + H2O = S-adenosyl-L-methionine + phosphate + diphosphate. It participates in amino-acid biosynthesis; S-adenosyl-L-methionine biosynthesis; S-adenosyl-L-methionine from L-methionine: step 1/1. Catalyzes the formation of S-adenosylmethionine (AdoMet) from methionine and ATP. The overall synthetic reaction is composed of two sequential steps, AdoMet formation and the subsequent tripolyphosphate hydrolysis which occurs prior to release of AdoMet from the enzyme. The sequence is that of S-adenosylmethionine synthase from Verminephrobacter eiseniae (strain EF01-2).